The primary structure comprises 143 residues: Nucleoside diphosphate kinase (143 aa).

Residues lysine 11, phenylalanine 59, arginine 87, threonine 93, arginine 104, and asparagine 114 each coordinate ATP. The active-site Pros-phosphohistidine intermediate is the histidine 117.

The protein belongs to the NDK family. Homotetramer. Mg(2+) serves as cofactor.

Its subcellular location is the cytoplasm. It carries out the reaction a 2'-deoxyribonucleoside 5'-diphosphate + ATP = a 2'-deoxyribonucleoside 5'-triphosphate + ADP. The enzyme catalyses a ribonucleoside 5'-diphosphate + ATP = a ribonucleoside 5'-triphosphate + ADP. In terms of biological role, major role in the synthesis of nucleoside triphosphates other than ATP. The ATP gamma phosphate is transferred to the NDP beta phosphate via a ping-pong mechanism, using a phosphorylated active-site intermediate. This chain is Nucleoside diphosphate kinase, found in Shewanella halifaxensis (strain HAW-EB4).